The primary structure comprises 256 residues: Thiazole synthase (256 aa).

Lys95 (schiff-base intermediate with DXP) is an active-site residue. Residues Gly156, 182–183 (AG), and 204–205 (NT) each bind 1-deoxy-D-xylulose 5-phosphate.

Belongs to the ThiG family. Homotetramer. Forms heterodimers with either ThiH or ThiS.

The protein resides in the cytoplasm. It carries out the reaction [ThiS sulfur-carrier protein]-C-terminal-Gly-aminoethanethioate + 2-iminoacetate + 1-deoxy-D-xylulose 5-phosphate = [ThiS sulfur-carrier protein]-C-terminal Gly-Gly + 2-[(2R,5Z)-2-carboxy-4-methylthiazol-5(2H)-ylidene]ethyl phosphate + 2 H2O + H(+). It functions in the pathway cofactor biosynthesis; thiamine diphosphate biosynthesis. Its function is as follows. Catalyzes the rearrangement of 1-deoxy-D-xylulose 5-phosphate (DXP) to produce the thiazole phosphate moiety of thiamine. Sulfur is provided by the thiocarboxylate moiety of the carrier protein ThiS. In vitro, sulfur can be provided by H(2)S. The sequence is that of Thiazole synthase from Salmonella paratyphi B (strain ATCC BAA-1250 / SPB7).